Here is a 388-residue protein sequence, read N- to C-terminus: MAESNFVDYVKIYCRSGKGGRGSTHMRREKYTPNGGPDGGDGGRGGHVILRGNRNYWTLLHLRYDRHAMAGHGESGSKNRSFGKDGADKIIEVPCGTVVYNAETGEYVCDVTEHGQEVILLKGGRGGLGNWHFKTATRQAPRFAQPGEPMQEMTVILELKLLADVGLVGFPNAGKSTLLSAISAAKPKIADYPFTTLEPNLGIVSYRDGQSFVMADIPGIIEGASEGKGLGLRFLRHIERNSLLLFMIPADSDDIRKDYEVLLNELKTFNPEMLDKQRVLAITKSDMLDQELMDEIEPTLPEGIPHVFISSVSGLGISVLKDILWTELNKESNKIEAIVHRPKDVSRLQQELKDMGEDEELDYEYEDDGDGDEDDLDYEYEEEDWEDK.

An Obg domain is found at 4-162; sequence SNFVDYVKIY…MTVILELKLL (159 aa). Residues 18-45 are disordered; it reads KGGRGSTHMRREKYTPNGGPDGGDGGRG. A compositionally biased stretch (gly residues) spans 36 to 45; it reads GPDGGDGGRG. In terms of domain architecture, OBG-type G spans 163–329; the sequence is ADVGLVGFPN…LKDILWTELN (167 aa). GTP is bound by residues 169 to 176, 194 to 198, 216 to 219, 283 to 286, and 310 to 312; these read GFPNAGKS, FTTLE, DIPG, TKSD, and SSV. The Mg(2+) site is built by S176 and T196. Residues 352–388 form a disordered region; that stretch reads LKDMGEDEELDYEYEDDGDGDEDDLDYEYEEEDWEDK. Over residues 356–388 the composition is skewed to acidic residues; it reads GEDEELDYEYEDDGDGDEDDLDYEYEEEDWEDK.

It belongs to the TRAFAC class OBG-HflX-like GTPase superfamily. OBG GTPase family. As to quaternary structure, monomer. Mg(2+) is required as a cofactor.

The protein resides in the cytoplasm. An essential GTPase which binds GTP, GDP and possibly (p)ppGpp with moderate affinity, with high nucleotide exchange rates and a fairly low GTP hydrolysis rate. Plays a role in control of the cell cycle, stress response, ribosome biogenesis and in those bacteria that undergo differentiation, in morphogenesis control. This chain is GTPase Obg, found in Bacteroides fragilis (strain ATCC 25285 / DSM 2151 / CCUG 4856 / JCM 11019 / LMG 10263 / NCTC 9343 / Onslow / VPI 2553 / EN-2).